A 144-amino-acid chain; its full sequence is Bacilliredoxin BH1716 (144 aa).

This sequence belongs to the bacilliredoxin family.

This is Bacilliredoxin BH1716 from Halalkalibacterium halodurans (strain ATCC BAA-125 / DSM 18197 / FERM 7344 / JCM 9153 / C-125) (Bacillus halodurans).